The chain runs to 558 residues: Potassium-transporting ATPase potassium-binding subunit 2 (558 aa).

12 helical membrane-spanning segments follow: residues 1–21 (MSIV…SRYL), 60–80 (IKHF…LLLI), 129–149 (VITF…IAML), 169–189 (FIVR…ISQG), 246–266 (WSNY…VFLF), 281–301 (IMIF…CLYF), 326–346 (FGIG…TGTV), 353–373 (LTPL…VFGG), 376–396 (VGLM…SLMI), 415–435 (IALS…LAFI), 485–505 (IVML…VSSL), and 523–543 (LFFS…TFLP).

The protein belongs to the KdpA family. As to quaternary structure, the system is composed of three essential subunits: KdpA, KdpB and KdpC.

It localises to the cell membrane. Part of the high-affinity ATP-driven potassium transport (or Kdp) system, which catalyzes the hydrolysis of ATP coupled with the electrogenic transport of potassium into the cytoplasm. This subunit binds the extracellular potassium ions and delivers the ions to the membrane domain of KdpB through an intramembrane tunnel. This Staphylococcus aureus (strain Mu50 / ATCC 700699) protein is Potassium-transporting ATPase potassium-binding subunit 2.